Reading from the N-terminus, the 326-residue chain is Tagatose 1,6-diphosphate aldolase (326 aa).

The protein belongs to the aldolase LacD family.

It catalyses the reaction D-tagatofuranose 1,6-bisphosphate = D-glyceraldehyde 3-phosphate + dihydroxyacetone phosphate. It participates in carbohydrate metabolism; D-tagatose 6-phosphate degradation; D-glyceraldehyde 3-phosphate and glycerone phosphate from D-tagatose 6-phosphate: step 2/2. The polypeptide is Tagatose 1,6-diphosphate aldolase (Staphylococcus aureus (strain MW2)).